The primary structure comprises 230 residues: Urease accessory protein UreE (230 aa).

Over residues 200–210 (HAIHSHGTGHT) the composition is skewed to basic residues. Residues 200–230 (HAIHSHGTGHTHSHDHDHSHSHGDHDHDHKH) are disordered. Over residues 211 to 230 (HSHDHDHSHSHGDHDHDHKH) the composition is skewed to basic and acidic residues.

This sequence belongs to the UreE family.

The protein localises to the cytoplasm. In terms of biological role, involved in urease metallocenter assembly. Binds nickel. Probably functions as a nickel donor during metallocenter assembly. This is Urease accessory protein UreE from Yersinia enterocolitica serotype O:8 / biotype 1B (strain NCTC 13174 / 8081).